The primary structure comprises 293 residues: Formamidopyrimidine-DNA glycosylase (293 aa).

The active-site Schiff-base intermediate with DNA is proline 2. The active-site Proton donor is the glutamate 3. Lysine 58 (proton donor; for beta-elimination activity) is an active-site residue. Residues histidine 104, arginine 123, and arginine 166 each coordinate DNA. Residues 257–293 (AVYDREGEPCRSKGCDGVVKRFVQNGRSTFWCPKCQK) form an FPG-type zinc finger. The active-site Proton donor; for delta-elimination activity is the arginine 283.

It belongs to the FPG family. In terms of assembly, monomer. Zn(2+) serves as cofactor.

The enzyme catalyses Hydrolysis of DNA containing ring-opened 7-methylguanine residues, releasing 2,6-diamino-4-hydroxy-5-(N-methyl)formamidopyrimidine.. The catalysed reaction is 2'-deoxyribonucleotide-(2'-deoxyribose 5'-phosphate)-2'-deoxyribonucleotide-DNA = a 3'-end 2'-deoxyribonucleotide-(2,3-dehydro-2,3-deoxyribose 5'-phosphate)-DNA + a 5'-end 5'-phospho-2'-deoxyribonucleoside-DNA + H(+). Its function is as follows. Involved in base excision repair of DNA damaged by oxidation or by mutagenic agents. Acts as a DNA glycosylase that recognizes and removes damaged bases. Has a preference for oxidized purines, such as 7,8-dihydro-8-oxoguanine (8-oxoG). Has AP (apurinic/apyrimidinic) lyase activity and introduces nicks in the DNA strand. Cleaves the DNA backbone by beta-delta elimination to generate a single-strand break at the site of the removed base with both 3'- and 5'-phosphates. The protein is Formamidopyrimidine-DNA glycosylase of Rhodopseudomonas palustris (strain BisB18).